A 946-amino-acid chain; its full sequence is Probable leucine-rich repeat receptor-like protein kinase At5g49770 (946 aa).

Positions 1-25 (MKMSSRIGLFKLLILLFFQIYSVYA) are cleaved as a signal peptide. The Extracellular segment spans residues 26-561 (FTDGSDFTAL…LEDSKTVSMK (536 aa)). LRR repeat units lie at residues 67-91 (DNRVVSISLTNRNLKGKLPTEISTL), 92-116 (SELQTLDLTGNPELSGPLPANIGNL), 118-140 (KLTFLSLMGCAFNGPIPDSIGNL), 141-164 (EQLTRLSLNLNKFSGTIPASMGRL), 166-191 (KLYWFDIADNQLEGKLPVSDGASLPG), 195-219 (LLQTGHFHFGNNKLSGEIPEKLFSS), 221-244 (MTLLHVLFDGNQFTGSIPESLGLV), 245-268 (QNLTVLRLDRNRLSGDIPSSLNNL), 269-293 (TNLQELHLSDNKFTGSLPNLTSLTS), 295-314 (YTLDVSNNPLALSPVPSWIP), 316-340 (LNSLSTLRLEDIQLDGPVPTSLFSP), 342-365 (QLQTVSLKHNLINTTLDLGTNYSK), 367-387 (LDFVDLRDNFITGYKSPANNP), and 389-407 (NVMLADNQVCQDPANQLSG). N-linked (GlcNAc...) asparagine glycans are attached at residues Asn-246, Asn-267, and Asn-287. Residues Asn-354 and Asn-362 are each glycosylated (N-linked (GlcNAc...) asparagine). Asn-415, Asn-460, Asn-489, and Asn-514 each carry an N-linked (GlcNAc...) asparagine glycan. Residues 562–582 (VIIGVVVGVVVLLLLLALAGI) form a helical membrane-spanning segment. At 583 to 946 (YALRQKKRAQ…YTGVFPTPKP (364 aa)) the chain is on the cytoplasmic side. The Protein kinase domain occupies 634 to 908 (FSDANDVGGG…EVVQELESIL (275 aa)). ATP-binding positions include 640–648 (VGGGGYGQV) and Lys-662. The active-site Proton acceptor is the Asp-758. Residues 919-946 (SATYEEASGDPYGRDSFEYTGVFPTPKP) are disordered.

Belongs to the protein kinase superfamily. Ser/Thr protein kinase family.

The protein resides in the membrane. The enzyme catalyses L-seryl-[protein] + ATP = O-phospho-L-seryl-[protein] + ADP + H(+). The catalysed reaction is L-threonyl-[protein] + ATP = O-phospho-L-threonyl-[protein] + ADP + H(+). In Arabidopsis thaliana (Mouse-ear cress), this protein is Probable leucine-rich repeat receptor-like protein kinase At5g49770.